The primary structure comprises 377 residues: RIB43A-like with coiled-coils protein 2 (377 aa).

Residues 188-238 (ELKFDEAARDLQRLEITTRKAVCAAVKEFNKKQVVELAERKRQVKQQEQED) adopt a coiled-coil conformation. Residues 355–377 (QLDAAPSSQPTEDYFSQFNTRSR) are disordered. The segment covering 360-377 (PSSQPTEDYFSQFNTRSR) has biased composition (polar residues).

Belongs to the RIB43A family. As to quaternary structure, microtubule inner protein component of sperm flagellar doublet microtubules.

It is found in the cytoplasm. The protein localises to the cytoskeleton. The protein resides in the cilium axoneme. Its subcellular location is the flagellum axoneme. Its function is as follows. Microtubule inner protein (MIP) part of the dynein-decorated doublet microtubules (DMTs) in cilia axoneme, which is required for motile cilia beating. This Rattus norvegicus (Rat) protein is RIB43A-like with coiled-coils protein 2.